The chain runs to 85 residues: Putative sodium channel toxin Ts37 (85 aa).

The N-terminal stretch at 1-20 is a signal peptide; sequence MAGEWACLLVSLVLLWGAAG. Residues 22–83 enclose the LCN-type CS-alpha/beta domain; that stretch reads RDGFLLDRNF…KIWGDSVRCR (62 aa). 4 disulfide bridges follow: Cys32/Cys82, Cys36/Cys59, Cys45/Cys64, and Cys49/Cys66.

Belongs to the long (4 C-C) scorpion toxin superfamily. Sodium channel inhibitor family. In terms of tissue distribution, expressed by the venom gland.

It is found in the secreted. In terms of biological role, putative sodium channel toxin. In Tityus serrulatus (Brazilian scorpion), this protein is Putative sodium channel toxin Ts37.